Reading from the N-terminus, the 175-residue chain is Shikimate kinase (175 aa).

10 to 15 provides a ligand contact to ATP; sequence GAGKTT. T14 is a binding site for Mg(2+). Residues D32, R56, and G78 each contribute to the substrate site. ATP is bound at residue R116. R135 contacts substrate.

Belongs to the shikimate kinase family. As to quaternary structure, monomer. Mg(2+) is required as a cofactor.

Its subcellular location is the cytoplasm. The catalysed reaction is shikimate + ATP = 3-phosphoshikimate + ADP + H(+). It functions in the pathway metabolic intermediate biosynthesis; chorismate biosynthesis; chorismate from D-erythrose 4-phosphate and phosphoenolpyruvate: step 5/7. Its function is as follows. Catalyzes the specific phosphorylation of the 3-hydroxyl group of shikimic acid using ATP as a cosubstrate. The polypeptide is Shikimate kinase (Aromatoleum aromaticum (strain DSM 19018 / LMG 30748 / EbN1) (Azoarcus sp. (strain EbN1))).